Consider the following 261-residue polypeptide: Thiazole synthase (261 aa).

Lys-102 acts as the Schiff-base intermediate with DXP in catalysis. Residues Gly-163, 189–190 (AG), and 211–212 (NT) each bind 1-deoxy-D-xylulose 5-phosphate.

Belongs to the ThiG family. In terms of assembly, homotetramer. Forms heterodimers with either ThiH or ThiS.

It localises to the cytoplasm. The catalysed reaction is [ThiS sulfur-carrier protein]-C-terminal-Gly-aminoethanethioate + 2-iminoacetate + 1-deoxy-D-xylulose 5-phosphate = [ThiS sulfur-carrier protein]-C-terminal Gly-Gly + 2-[(2R,5Z)-2-carboxy-4-methylthiazol-5(2H)-ylidene]ethyl phosphate + 2 H2O + H(+). It participates in cofactor biosynthesis; thiamine diphosphate biosynthesis. Catalyzes the rearrangement of 1-deoxy-D-xylulose 5-phosphate (DXP) to produce the thiazole phosphate moiety of thiamine. Sulfur is provided by the thiocarboxylate moiety of the carrier protein ThiS. In vitro, sulfur can be provided by H(2)S. This chain is Thiazole synthase, found in Acinetobacter baylyi (strain ATCC 33305 / BD413 / ADP1).